Reading from the N-terminus, the 291-residue chain is Elongation factor Ts, mitochondrial (291 aa).

The protein belongs to the EF-Ts family.

Its subcellular location is the mitochondrion. Functionally, associates with the EF-Tu.GDP complex and induces the exchange of GDP to GTP. It remains bound to the aminoacyl-tRNA.EF-Tu.GTP complex up to the GTP hydrolysis stage on the ribosome. This Nematostella vectensis (Starlet sea anemone) protein is Elongation factor Ts, mitochondrial.